The sequence spans 458 residues: tRNA modification GTPase MnmE (458 aa).

(6S)-5-formyl-5,6,7,8-tetrahydrofolate is bound by residues Arg-26, Glu-88, and Arg-127. The TrmE-type G domain occupies 224 to 378 (GLSTAIIGRP…IEDRINQLFF (155 aa)). Asn-234 provides a ligand contact to K(+). Residues 234 to 239 (NVGKSS), 253 to 259 (TDIAGTT), and 278 to 281 (DTAG) each bind GTP. Ser-238 serves as a coordination point for Mg(2+). K(+) contacts are provided by Thr-253, Ile-255, and Thr-258. Thr-259 lines the Mg(2+) pocket. (6S)-5-formyl-5,6,7,8-tetrahydrofolate is bound at residue Lys-458.

It belongs to the TRAFAC class TrmE-Era-EngA-EngB-Septin-like GTPase superfamily. TrmE GTPase family. Homodimer. Heterotetramer of two MnmE and two MnmG subunits. K(+) serves as cofactor.

Its subcellular location is the cytoplasm. Functionally, exhibits a very high intrinsic GTPase hydrolysis rate. Involved in the addition of a carboxymethylaminomethyl (cmnm) group at the wobble position (U34) of certain tRNAs, forming tRNA-cmnm(5)s(2)U34. This chain is tRNA modification GTPase MnmE, found in Streptococcus pyogenes serotype M5 (strain Manfredo).